Consider the following 86-residue polypeptide: Cell division topological specificity factor (86 aa).

Belongs to the MinE family.

Its function is as follows. Prevents the cell division inhibition by proteins MinC and MinD at internal division sites while permitting inhibition at polar sites. This ensures cell division at the proper site by restricting the formation of a division septum at the midpoint of the long axis of the cell. The polypeptide is Cell division topological specificity factor (Stenotrophomonas maltophilia (strain R551-3)).